A 68-amino-acid polypeptide reads, in one-letter code: ATP synthase F(0) complex subunit 8 (68 aa).

The helical transmembrane segment at 8 to 24 (TWFTIIMAMLPTLYLIT) threads the bilayer. An N6-acetyllysine; alternate modification is found at Lys-54. An N6-succinyllysine; alternate modification is found at Lys-54. At Lys-57 the chain carries N6-acetyllysine.

It belongs to the ATPase protein 8 family. As to quaternary structure, component of the ATP synthase complex composed at least of ATP5F1A/subunit alpha, ATP5F1B/subunit beta, ATP5MC1/subunit c (homooctomer), MT-ATP6/subunit a, MT-ATP8/subunit 8, ATP5ME/subunit e, ATP5MF/subunit f, ATP5MG/subunit g, ATP5MK/subunit k, ATP5MJ/subunit j, ATP5F1C/subunit gamma, ATP5F1D/subunit delta, ATP5F1E/subunit epsilon, ATP5PF/subunit F6, ATP5PB/subunit b, ATP5PD/subunit d, ATP5PO/subunit OSCP. ATP synthase complex consists of a soluble F(1) head domain (subunits alpha(3) and beta(3)) - the catalytic core - and a membrane F(0) domain - the membrane proton channel (subunits c, a, 8, e, f, g, k and j). These two domains are linked by a central stalk (subunits gamma, delta, and epsilon) rotating inside the F1 region and a stationary peripheral stalk (subunits F6, b, d, and OSCP). Interacts with PRICKLE3.

The protein resides in the mitochondrion membrane. Subunit 8, of the mitochondrial membrane ATP synthase complex (F(1)F(0) ATP synthase or Complex V) that produces ATP from ADP in the presence of a proton gradient across the membrane which is generated by electron transport complexes of the respiratory chain. ATP synthase complex consist of a soluble F(1) head domain - the catalytic core - and a membrane F(1) domain - the membrane proton channel. These two domains are linked by a central stalk rotating inside the F(1) region and a stationary peripheral stalk. During catalysis, ATP synthesis in the catalytic domain of F(1) is coupled via a rotary mechanism of the central stalk subunits to proton translocation. In vivo, can only synthesize ATP although its ATP hydrolase activity can be activated artificially in vitro. Part of the complex F(0) domain. The polypeptide is ATP synthase F(0) complex subunit 8 (Papio hamadryas (Hamadryas baboon)).